The sequence spans 570 residues: Serine/threonine-protein kinase flr-4 (570 aa).

The Protein kinase domain occupies 40–331 (YKYIQDLGKG…KLRIQIKKIL (292 aa)). Residues 46 to 54 (LGKGRFGTV) and Lys-67 contribute to the ATP site. Catalysis depends on Asp-172, which acts as the Proton acceptor. The disordered stretch occupies residues 338 to 369 (EEETDISHPISNSNTDSSTAISHNHSNDRKVG). The segment covering 346-361 (PISNSNTDSSTAISHN) has biased composition (polar residues). 3 helical membrane passes run 400 to 420 (IMQIFVASGYYLSRILYFLNI), 425 to 445 (ICYLLLFLSLGITALGSFLLI), and 471 to 491 (LIISGILIVLMFALLFSCCMV). The disordered stretch occupies residues 550 to 570 (VRRNHDDYYYDESSGPANEEN).

Belongs to the protein kinase superfamily. Ser/Thr protein kinase family. As to expression, present in the intestinal cells from comma-stage embryos through the adult stage, although the intestinal expression is weaker after the L1 stage. Accumulates at the cell membrane of intestinal cells, especially the lateral membrane intervening the intestinal cells. Also detected in the muscles of the pharyngeal isthmus from the 3-fold embryonic stage, and in a pair of head neurons, which correspond to the AUA neurons, from the late L1 stage (at protein level).

The protein localises to the membrane. It catalyses the reaction L-seryl-[protein] + ATP = O-phospho-L-seryl-[protein] + ADP + H(+). It carries out the reaction L-threonyl-[protein] + ATP = O-phospho-L-threonyl-[protein] + ADP + H(+). Its function is as follows. Probable serine-threonine protein kinase involved in the control of defecation rhythms. Required to increase the length of defecation cycle period. Acts in a cell-functional rather than developmental aspect in the regulation of defecation rhythms. Prevents preferential activation of the p38 MAPK pathway in response to the levels of vitamin B12 in different food types during larval development, thereby regulating the expression of cytoprotective genes, modulating life span and stress tolerance. The protein is Serine/threonine-protein kinase flr-4 (flr-4) of Caenorhabditis elegans.